The primary structure comprises 468 residues: Protein maelstrom 2 (468 aa).

The HMG box DNA-binding region spans Pro2 to Asn69. The tract at residues Lys374–Ser393 is disordered. Residues Leu381–Ser393 are compositionally biased toward low complexity.

It belongs to the maelstrom family.

It is found in the cytoplasm. The protein resides in the nucleus. Its function is as follows. Involved both in the piRNA and miRNA metabolic processes. As a component of the meiotic nuage, plays a central role during oogenesis by repressing transposable elements and preventing their mobilization, which is essential for the germline integrity. Repression of transposable elements is mediated via the piRNA metabolic process, which mediates the repression of transposable elements during meiosis by forming complexes composed of piRNAs and Piwi proteins and governs the repression of transposons. As a nuclear component, it is required for proper differentiation in the germline stem cell (GSC) lineage by repressing microRNA-7 (miR-7), thereby acting as an indirect regulator of bag-of-marbles (Bam). Acts by binding to the promoter of miR-7 gene and repressing its expression; miR-7 repression alleviates the Bam repression by miR-7, thereby allowing differentiation in the germline stem cell (GSC) lineage. This is Protein maelstrom 2 (mael2) from Drosophila ananassae (Fruit fly).